The primary structure comprises 237 residues: ATP-dependent dethiobiotin synthetase BioD (237 aa).

21–26 lines the ATP pocket; the sequence is GVGKTV. T25 provides a ligand contact to Mg(2+). K48 is a catalytic residue. Residue T52 coordinates substrate. ATP contacts are provided by residues D56, 117 to 120, 177 to 178, and 209 to 211; these read EALG, SC, and PYL. Mg(2+)-binding residues include D56 and E117.

It belongs to the dethiobiotin synthetase family. Homodimer. Mg(2+) is required as a cofactor.

The protein localises to the cytoplasm. It carries out the reaction (7R,8S)-7,8-diammoniononanoate + CO2 + ATP = (4R,5S)-dethiobiotin + ADP + phosphate + 3 H(+). The catalysed reaction is (7R,8S)-8-amino-7-(carboxyamino)nonanoate + ATP = (4R,5S)-dethiobiotin + ADP + phosphate + H(+). It functions in the pathway cofactor biosynthesis; biotin biosynthesis; biotin from 7,8-diaminononanoate: step 1/2. Catalyzes a mechanistically unusual reaction, the ATP-dependent insertion of CO2 between the N7 and N8 nitrogen atoms of 7,8-diaminopelargonic acid (DAPA, also called 7,8-diammoniononanoate) to form a ureido ring. This cyanobacterium does not encode bioA (which catalyzes the formation of the precursor for this reaction in the cannonical pathway), instead it encodes bioU, which replaces bioA and also performs the first half of the cannonical BioD reaction. Thus in this bacteria BioD has a different substrate. In Synechocystis replacement of bioU by bioA from E.coli leads to biotin synthesis, showing BioD can use the 'cannonical' 7,8-diammoniononanoate as a substrate. The protein is ATP-dependent dethiobiotin synthetase BioD of Synechocystis sp. (strain ATCC 27184 / PCC 6803 / Kazusa).